A 258-amino-acid polypeptide reads, in one-letter code: Imidazole glycerol phosphate synthase subunit HisF (258 aa).

Active-site residues include Asp-11 and Asp-130.

This sequence belongs to the HisA/HisF family. As to quaternary structure, heterodimer of HisH and HisF.

The protein resides in the cytoplasm. It carries out the reaction 5-[(5-phospho-1-deoxy-D-ribulos-1-ylimino)methylamino]-1-(5-phospho-beta-D-ribosyl)imidazole-4-carboxamide + L-glutamine = D-erythro-1-(imidazol-4-yl)glycerol 3-phosphate + 5-amino-1-(5-phospho-beta-D-ribosyl)imidazole-4-carboxamide + L-glutamate + H(+). Its pathway is amino-acid biosynthesis; L-histidine biosynthesis; L-histidine from 5-phospho-alpha-D-ribose 1-diphosphate: step 5/9. Functionally, IGPS catalyzes the conversion of PRFAR and glutamine to IGP, AICAR and glutamate. The HisF subunit catalyzes the cyclization activity that produces IGP and AICAR from PRFAR using the ammonia provided by the HisH subunit. This chain is Imidazole glycerol phosphate synthase subunit HisF, found in Xanthomonas campestris pv. campestris (strain 8004).